We begin with the raw amino-acid sequence, 182 residues long: Cytidylate kinase (182 aa).

7-15 contributes to the ATP binding site; the sequence is GPPGSGKSS.

It belongs to the cytidylate kinase family. Type 2 subfamily.

The protein resides in the cytoplasm. It catalyses the reaction CMP + ATP = CDP + ADP. It carries out the reaction dCMP + ATP = dCDP + ADP. In Sulfolobus acidocaldarius (strain ATCC 33909 / DSM 639 / JCM 8929 / NBRC 15157 / NCIMB 11770), this protein is Cytidylate kinase (cmk).